We begin with the raw amino-acid sequence, 474 residues long: MTTFKEAVTFKDVAVFFTEEELGLLDPAQRKLYQDVMLENFTNLLSVGHQPFHPFHFLREEKFWMMETATQREGNSGGKTIAEAGPHEDCPCQQIWEQTASDLTQSQDSIINNSHFFEQGDVPSQVEAGLSIIHTGQKPSQNGKCKQSFSDVAIFDPPQQFHSGEKSHTCNECGKSFCYISALRIHQRVHLREKLSKCDMRGKEFSQSSCLQTRERVHTGEKPFKCEQCGKGFRCRAILQVHCKLHTGEKPYICEKCGRAFIHDFQLQKHQIIHTGEKPFKCEICGKSFCLRSSLNRHCMVHTAEKLYKSEECGKGFTDSLDLHKHQIIHTGQKPYNCKECGKSFRWSSYLLIHQRIHSGEKPYRCEECGKGYISKSGLNLHQRVHTGERPYNCKECGKSFSRASSILNHKKLHCRKKPFKCEDCGKRLVHRSFCKDQQGDHNGENSSKCEDCGKRYKRRLNLDIILSLFLNDM.

A KRAB domain is found at 8 to 76 (VTFKDVAVFF…ETATQREGNS (69 aa)). Residues 80–167 (TIAEAGPHED…PQQFHSGEKS (88 aa)) form a KRNB region. 9 consecutive C2H2-type zinc fingers follow at residues 168–190 (HTCN…QRVH), 196–218 (SKCD…ERVH), 224–246 (FKCE…CKLH), 252–274 (YICE…QIIH), 280–302 (FKCE…CMVH), 308–330 (YKSE…QIIH), 336–358 (YNCK…QRIH), 364–386 (YRCE…QRVH), and 392–414 (YNCK…KKLH). The C2H2-type 10; atypical zinc finger occupies 420–442 (FKCEDCGKRLVHRSFCKDQQGDH).

This sequence belongs to the krueppel C2H2-type zinc-finger protein family.

The protein localises to the nucleus. Its function is as follows. May be involved in transcriptional regulation. In Homo sapiens (Human), this protein is Zinc finger protein 230 (ZNF230).